The following is a 1006-amino-acid chain: Transmembrane channel-like protein 5 (1006 aa).

Residues 1-289 are disordered; sequence MSAYYRNNWS…DDPVGSLWGE (289 aa). The Extracellular segment spans residues 1–458; it reads MSAYYRNNWS…YFNFLRWLLK (458 aa). Polar residues-rich tracts occupy residues 20 to 30, 50 to 59, and 76 to 101; these read SGSQNRTQGYL, TRSNPYSVAS, and RSLSNPDYSGTRSNAYSAASRTSPDH. A compositionally biased stretch (low complexity) spans 138-149; that stretch reads AGSSSSGNYAGS. A compositionally biased stretch (basic and acidic residues) spans 239–250; the sequence is REPDYSDAENGH. The helical transmembrane segment at 459 to 479 threads the bilayer; sequence FNIFSFILNFSFIIIPQFTVA. Residues 480 to 485 lie on the Cytoplasmic side of the membrane; sequence KKNTLQ. Residues 486 to 508 traverse the membrane as a helical segment; that stretch reads FTGLEFFTGVGYFRDTVMYYGFY. At 509 to 525 the chain is on the extracellular side; the sequence is TNSTIQHGNSGASYNMQ. A helical membrane pass occupies residues 526 to 546; the sequence is LAYIFTIGACLTTCFFSLLFS. Over 547-619 the chain is Cytoplasmic; the sequence is MAKYFRNNFI…NQLLTRFSAY (73 aa). The helical transmembrane segment at 620–640 threads the bilayer; it reads MVAWVVSTGVAIACCAAVYYL. Over 641 to 654 the chain is Extracellular; that stretch reads AEYNLEFLKTHSNP. Residues 655-675 traverse the membrane as a helical segment; sequence GAVLLLPFVVSCINLAVPCIY. At 676–698 the chain is on the cytoplasmic side; that stretch reads SMFRLVERYEMPRHEVYVLLIRN. Residues 699–719 form a helical membrane-spanning segment; sequence IFLKISIIGILCYYWLNTVAL. Over 720–732 the chain is Extracellular; that stretch reads SGEECWETLIGQD. Residues 733–753 form a helical membrane-spanning segment; sequence IYRLLLMDFVFSLVNSFLGEF. Residues 754 to 786 lie on the Cytoplasmic side of the membrane; that stretch reads LRRIIGMQLITSLGLQEFDIARNVLELIYAQTL. The chain crosses the membrane as a helical span at residues 787 to 807; that stretch reads VWIGIFFCPLLPFIQMIMLFI. The Extracellular segment spans residues 808 to 835; sequence MFYSKNISLMMNFQPPSKAWRASQMMTF. Residues 836–856 form a helical membrane-spanning segment; sequence FIFLLFFPSFTGVLCTLAITI. The Cytoplasmic segment spans residues 857–900; the sequence is WRLKPSADCGPFRGLPLFIHSIYSWIDTLSTRPGYLWVVWIYRN. A helical transmembrane segment spans residues 901-921; that stretch reads LIGSVHFFFILTLIVLIITYL. Residues 922-1006 are Extracellular-facing; sequence YWQITEGRKI…RSVQEGNPRA (85 aa).

This sequence belongs to the TMC family.

Its subcellular location is the membrane. Its function is as follows. Probable component of an ion channel. Molecular function hasn't been characterized yet. This is Transmembrane channel-like protein 5 from Homo sapiens (Human).